Here is a 106-residue protein sequence, read N- to C-terminus: Cell division protein FtsL (106 aa).

Over 1-22 (MPRQSPPNLAKLIALDLLTVGR) the chain is Cytoplasmic. The helical transmembrane segment at 23–43 (VPLLLLVLIFSCAMGVVFMTH) threads the bilayer. At 44–106 (HTRQAISAKD…SDKEVVINLK (63 aa)) the chain is on the periplasmic side.

Belongs to the FtsL family. Part of a complex composed of FtsB, FtsL and FtsQ.

Its subcellular location is the cell inner membrane. Functionally, essential cell division protein. May link together the upstream cell division proteins, which are predominantly cytoplasmic, with the downstream cell division proteins, which are predominantly periplasmic. This is Cell division protein FtsL from Vibrio cholerae serotype O1 (strain ATCC 39315 / El Tor Inaba N16961).